The sequence spans 680 residues: MIDRYKHQQLRIGLVSPQQISAWATKKIPNGEIVGEVTKPYTFHYKTNKPEKDGLFCERIFGPIKSGICACGNYRVIGDEKEDPKFCEQCGVEFVDSRIRRYQMGYIKLTCPVTHVWYLKRLPSYIANLLDKPLKELEGLVYCDFSFARPITKKPTFLRLRGSFEYEIQSWKYSIPLFFTTQGFDIFRNREISTGAGAIREQLADLDLRIIIENSLVEWKQLGEEGPTGNEWEDRKIVRRKDFLVRRMELAKHFIRTNIEPEWMVLCLLPVLPPELRPIIQIEGGKLMSSDINELYRRVIYRNNTLTDLLTTSRSTPGELVMCQEKLVQEAVDTLLDNGIRGQPMRDGHNKVYKSFSDVIEGKEGRFRETLLGKRVDYSGRSVIVVGPSLSLHRCGLPREIAIELFQTFVIRGLIRQHLASNIGVAKSQIREKKPIVWEILQEVMQGHPVLLNRAPTLHRLGIQSFQPILVEGRTICLHPLVCKGFNADFDGDQMAVHVPLSLEAQAEARLLMFSHMNLLSPAIGDPISVPTQDMLIGLYVLTSGTRRGICANRYNPCNRKNDKNEKLYETNYKYMKEPFFCNSYDAIGAYRQKRINLDSPLWLRWQLDQRVIASREVPIEVHYESFGNYHEIYAHYLIVRSVKKETFCIYIRTTAGHISFYREIEEAIQGFSQACSYDT.

Residues C69, C71, C87, and C90 each contribute to the Zn(2+) site. Mg(2+) contacts are provided by D489, D491, and D493.

The protein belongs to the RNA polymerase beta' chain family. RpoC1 subfamily. In terms of assembly, in plastids the minimal PEP RNA polymerase catalytic core is composed of four subunits: alpha, beta, beta', and beta''. When a (nuclear-encoded) sigma factor is associated with the core the holoenzyme is formed, which can initiate transcription. It depends on Mg(2+) as a cofactor. Requires Zn(2+) as cofactor.

The protein localises to the plastid. It localises to the chloroplast. The catalysed reaction is RNA(n) + a ribonucleoside 5'-triphosphate = RNA(n+1) + diphosphate. Its function is as follows. DNA-dependent RNA polymerase catalyzes the transcription of DNA into RNA using the four ribonucleoside triphosphates as substrates. The chain is DNA-directed RNA polymerase subunit beta' from Draba nemorosa (Woodland whitlowgrass).